The primary structure comprises 276 residues: Glucosamine-6-phosphate deaminase 2 (276 aa).

Residue aspartate 72 is the Proton acceptor; for enolization step of the active site. Positions 103–131 (NAHILDGNAADLQAECDAFEEKIKEAGGI) form a coiled coil. Residue aspartate 141 is the For ring-opening step of the active site. The Proton acceptor; for ring-opening step role is filled by histidine 143. Glutamate 148 acts as the For ring-opening step in catalysis. At threonine 161 the chain carries Phosphothreonine.

This sequence belongs to the glucosamine/galactosamine-6-phosphate isomerase family. In terms of assembly, homohexamer.

It is found in the cytoplasm. The enzyme catalyses alpha-D-glucosamine 6-phosphate + H2O = beta-D-fructose 6-phosphate + NH4(+). It functions in the pathway nucleotide-sugar biosynthesis; UDP-N-acetyl-alpha-D-glucosamine biosynthesis; alpha-D-glucosamine 6-phosphate from D-fructose 6-phosphate: step 1/1. Its activity is regulated as follows. Allosterically activated by N-acetylglucosamine-6-phosphate (GlcNAc6P). In terms of biological role, catalyzes the reversible conversion of alpha-D-glucosamine 6-phosphate (GlcN-6P) into beta-D-fructose 6-phosphate (Fru-6P) and ammonium ion, a regulatory reaction step in de novo uridine diphosphate-N-acetyl-alpha-D-glucosamine (UDP-GlcNAc) biosynthesis via hexosamine pathway. Deamination is coupled to aldo-keto isomerization mediating the metabolic flux from UDP-GlcNAc toward Fru-6P. At high ammonium level can drive amination and isomerization of Fru-6P toward hexosamines and UDP-GlcNAc synthesis. Has a role in fine tuning the metabolic fluctuations of cytosolic UDP-GlcNAc and their effects on hyaluronan synthesis that occur during tissue remodeling. This Mus musculus (Mouse) protein is Glucosamine-6-phosphate deaminase 2.